The primary structure comprises 337 residues: Ornithine carbamoyltransferase (337 aa).

Carbamoyl phosphate is bound by residues 57–60 (STRT), Gln84, Arg108, and 135–138 (HPTQ). Residues Asn167, Asp231, and 235–236 (SM) each bind L-ornithine. Carbamoyl phosphate-binding positions include 272–273 (CL) and Arg317.

Belongs to the aspartate/ornithine carbamoyltransferase superfamily. OTCase family.

The protein localises to the cytoplasm. The enzyme catalyses carbamoyl phosphate + L-ornithine = L-citrulline + phosphate + H(+). It participates in amino-acid degradation; L-arginine degradation via ADI pathway; carbamoyl phosphate from L-arginine: step 2/2. Functionally, reversibly catalyzes the transfer of the carbamoyl group from carbamoyl phosphate (CP) to the N(epsilon) atom of ornithine (ORN) to produce L-citrulline. This chain is Ornithine carbamoyltransferase, found in Streptococcus equi subsp. zooepidemicus (strain MGCS10565).